A 318-amino-acid chain; its full sequence is Methionyl-tRNA formyltransferase (318 aa).

Ser-114–Pro-117 lines the (6S)-5,6,7,8-tetrahydrofolate pocket.

It belongs to the Fmt family.

The catalysed reaction is L-methionyl-tRNA(fMet) + (6R)-10-formyltetrahydrofolate = N-formyl-L-methionyl-tRNA(fMet) + (6S)-5,6,7,8-tetrahydrofolate + H(+). In terms of biological role, attaches a formyl group to the free amino group of methionyl-tRNA(fMet). The formyl group appears to play a dual role in the initiator identity of N-formylmethionyl-tRNA by promoting its recognition by IF2 and preventing the misappropriation of this tRNA by the elongation apparatus. This Protochlamydia amoebophila (strain UWE25) protein is Methionyl-tRNA formyltransferase.